The primary structure comprises 83 residues: ATP synthase subunit c (83 aa).

2 helical membrane passes run 10–30 and 52–72; these read IAVALLIGMGALGTAIGFGLL and MFIVAGLLDAVTMIGVGIALY.

This sequence belongs to the ATPase C chain family. F-type ATPases have 2 components, F(1) - the catalytic core - and F(0) - the membrane proton channel. F(1) has five subunits: alpha(3), beta(3), gamma(1), delta(1), epsilon(1). F(0) has three main subunits: a(1), b(2) and c(10-14). The alpha and beta chains form an alternating ring which encloses part of the gamma chain. F(1) is attached to F(0) by a central stalk formed by the gamma and epsilon chains, while a peripheral stalk is formed by the delta and b chains.

The protein localises to the cell inner membrane. F(1)F(0) ATP synthase produces ATP from ADP in the presence of a proton or sodium gradient. F-type ATPases consist of two structural domains, F(1) containing the extramembraneous catalytic core and F(0) containing the membrane proton channel, linked together by a central stalk and a peripheral stalk. During catalysis, ATP synthesis in the catalytic domain of F(1) is coupled via a rotary mechanism of the central stalk subunits to proton translocation. Functionally, key component of the F(0) channel; it plays a direct role in translocation across the membrane. A homomeric c-ring of between 10-14 subunits forms the central stalk rotor element with the F(1) delta and epsilon subunits. In Shewanella amazonensis (strain ATCC BAA-1098 / SB2B), this protein is ATP synthase subunit c.